The sequence spans 95 residues: uncharacterized protein (95 aa).

The disordered stretch occupies residues 46-68 (GDRGTNGRTEAEHDGIPHSRKKV).

This is an uncharacterized protein from Schizosaccharomyces pombe (strain 972 / ATCC 24843) (Fission yeast).